Here is a 319-residue protein sequence, read N- to C-terminus: Transaldolase (319 aa).

Residue Lys125 is the Schiff-base intermediate with substrate of the active site.

The protein belongs to the transaldolase family. Type 1 subfamily. As to quaternary structure, homodimer.

Its subcellular location is the cytoplasm. The enzyme catalyses D-sedoheptulose 7-phosphate + D-glyceraldehyde 3-phosphate = D-erythrose 4-phosphate + beta-D-fructose 6-phosphate. Its pathway is carbohydrate degradation; pentose phosphate pathway; D-glyceraldehyde 3-phosphate and beta-D-fructose 6-phosphate from D-ribose 5-phosphate and D-xylulose 5-phosphate (non-oxidative stage): step 2/3. In terms of biological role, transaldolase is important for the balance of metabolites in the pentose-phosphate pathway. This chain is Transaldolase, found in Ralstonia pickettii (strain 12J).